The chain runs to 316 residues: Probable 5-dehydro-4-deoxyglucarate dehydratase 1 (316 aa).

The protein belongs to the DapA family.

The catalysed reaction is 5-dehydro-4-deoxy-D-glucarate + H(+) = 2,5-dioxopentanoate + CO2 + H2O. The protein operates within carbohydrate acid metabolism; D-glucarate degradation; 2,5-dioxopentanoate from D-glucarate: step 2/2. In Streptomyces coelicolor (strain ATCC BAA-471 / A3(2) / M145), this protein is Probable 5-dehydro-4-deoxyglucarate dehydratase 1.